The following is a 512-amino-acid chain: Probable malate:quinone oxidoreductase (512 aa).

Belongs to the MQO family. FAD is required as a cofactor.

It catalyses the reaction (S)-malate + a quinone = a quinol + oxaloacetate. It functions in the pathway carbohydrate metabolism; tricarboxylic acid cycle; oxaloacetate from (S)-malate (quinone route): step 1/1. The polypeptide is Probable malate:quinone oxidoreductase (Bradyrhizobium diazoefficiens (strain JCM 10833 / BCRC 13528 / IAM 13628 / NBRC 14792 / USDA 110)).